Reading from the N-terminus, the 374-residue chain is AA14 family lytic polysaccharide monooxygenase B (374 aa).

The signal sequence occupies residues 1–18 (MIPVFLAAIAVFLPLTSG). N-linked (GlcNAc...) asparagine glycosylation is found at Asn-31, Asn-49, Asn-94, and Asn-151. 5 disulfide bridges follow: Cys-85–Cys-108, Cys-127–Cys-154, Cys-171–Cys-176, Cys-178–Cys-200, and Cys-220–Cys-236. 2 N-linked (GlcNAc...) asparagine glycosylation sites follow: Asn-235 and Asn-315. The interval 306 to 374 (ISNATPAPSN…TQSRKMRYVF (69 aa)) is disordered. Residues 313 to 344 (PSNGSCSSRPPSSPVSSSAASTTTSRSPRPSA) are compositionally biased toward low complexity.

This sequence belongs to the polysaccharide monooxygenase AA14 family. It depends on Cu(2+) as a cofactor.

The protein resides in the secreted. Functionally, lytic polysaccharide monooxygenase (LPMO) that oxidatively cleaves xylan with both C1 and C4 regioselectivity and that specifically targets the protective shield made by heteroxylans that cover cellulose microfibrils in wood. Catalysis by LPMOs requires the reduction of the active-site copper from Cu(II) to Cu(I) by a reducing agent and H(2)O(2) or O(2) as a cosubstrate. Cleavage occurs only when xylans are bound to cellulose and not when they are in solution. Increases the efficiency of wood saccharification through oxidative cleavage of highly refractory xylan-coated cellulose fibers via synergistic relationship with xylan-active enzymes, xylobiohydrolases and cellobiohydrolases. The protein is AA14 family lytic polysaccharide monooxygenase B of Pycnoporus cinnabarinus (Cinnabar-red polypore).